A 447-amino-acid chain; its full sequence is Methylenetetrahydrofolate--tRNA-(uracil-5-)-methyltransferase TrmFO (447 aa).

13 to 18 (GAGLAG) lines the FAD pocket.

Belongs to the MnmG family. TrmFO subfamily. FAD serves as cofactor.

Its subcellular location is the cytoplasm. The enzyme catalyses uridine(54) in tRNA + (6R)-5,10-methylene-5,6,7,8-tetrahydrofolate + NADH + H(+) = 5-methyluridine(54) in tRNA + (6S)-5,6,7,8-tetrahydrofolate + NAD(+). It carries out the reaction uridine(54) in tRNA + (6R)-5,10-methylene-5,6,7,8-tetrahydrofolate + NADPH + H(+) = 5-methyluridine(54) in tRNA + (6S)-5,6,7,8-tetrahydrofolate + NADP(+). Functionally, catalyzes the folate-dependent formation of 5-methyl-uridine at position 54 (M-5-U54) in all tRNAs. The polypeptide is Methylenetetrahydrofolate--tRNA-(uracil-5-)-methyltransferase TrmFO (Streptococcus thermophilus (strain CNRZ 1066)).